Consider the following 252-residue polypeptide: Trans-aconitate 2-methyltransferase (252 aa).

It belongs to the methyltransferase superfamily. Tam family.

It localises to the cytoplasm. It catalyses the reaction trans-aconitate + S-adenosyl-L-methionine = (E)-3-(methoxycarbonyl)pent-2-enedioate + S-adenosyl-L-homocysteine. Functionally, catalyzes the S-adenosylmethionine monomethyl esterification of trans-aconitate. This Enterobacter sp. (strain 638) protein is Trans-aconitate 2-methyltransferase.